The sequence spans 614 residues: ATP-dependent RNA helicase dbp-3 (614 aa).

Residues 1-138 (MSSTKKHSRS…GTTTPAASTN (138 aa)) are disordered. Residues 9 to 36 (RSEGEEKDARLAKKVKTDETPVDGEVKK) are compositionally biased toward basic and acidic residues. Basic residues-rich tracts occupy residues 37–58 (ERKK…KSKK) and 91–109 (KKEK…KKAK). Positions 117 to 138 (EESTSASKATTNGTTTPAASTN) are enriched in low complexity. The Q motif motif lies at 180–207 (MNFSQLPQSNLISKNPFAAYTNPTPIQS). The Helicase ATP-binding domain maps to 210–394 (WPFSLSGRDV…ESYMINPAQV (185 aa)). 223 to 230 (AETGSGKT) provides a ligand contact to ATP. The DEAD box motif lies at 340–343 (DEAD). One can recognise a Helicase C-terminal domain in the interval 435 to 584 (RLYELLKEAQ…PVPEELLKFG (150 aa)).

Belongs to the DEAD box helicase family. DDX5/DBP2 subfamily.

It localises to the nucleus. The protein localises to the nucleolus. The catalysed reaction is ATP + H2O = ADP + phosphate + H(+). In terms of biological role, ATP-dependent RNA helicase required for 60S ribosomal subunit synthesis. Involved in efficient pre-rRNA processing, predominantly at site A3, which is necessary for the normal formation of 25S and 5.8S rRNAs. This Neurospora crassa (strain ATCC 24698 / 74-OR23-1A / CBS 708.71 / DSM 1257 / FGSC 987) protein is ATP-dependent RNA helicase dbp-3 (dbp-3).